The sequence spans 459 residues: Nuclear distribution protein nudF 1 (459 aa).

The LisH domain occupies 9 to 41 (QAEELHKSIIAYLSANNLSNAASALRGELGLSE). The stretch at 61 to 88 (TSIVRLQKKIMDLEARCGALQTELNNAT) forms a coiled coil. WD repeat units follow at residues 114 to 155 (SHRN…TTLK), 157 to 197 (HTRA…KNIR), 201 to 240 (GHEH…CVKT), 243 to 282 (GHSG…NPEA), 288 to 349 (GHDH…LMTL), 351 to 390 (GHDN…KCVK), 395 to 440 (AHGR…PQVQ), and 442 to 459 (RCVV…IFAN).

Belongs to the WD repeat LIS1/nudF family. Self-associates. Interacts with nudE and dynein.

Its subcellular location is the cytoplasm. It is found in the cytoskeleton. The protein localises to the spindle pole. Functionally, positively regulates the activity of the minus-end directed microtubule motor protein dynein. May enhance dynein-mediated microtubule sliding by targeting dynein to the microtubule plus end. Required for nuclear migration during vegetative growth as well as development. Required for retrograde early endosome (EE) transport from the hyphal tip. Required for localization of dynein to the mitotic spindle poles. Recruits additional proteins to the dynein complex at SPBs. The sequence is that of Nuclear distribution protein nudF 1 from Talaromyces marneffei (strain ATCC 18224 / CBS 334.59 / QM 7333) (Penicillium marneffei).